The following is a 269-amino-acid chain: 3-methyl-2-oxobutanoate hydroxymethyltransferase (269 aa).

2 residues coordinate Mg(2+): Asp51 and Asp90. 3-methyl-2-oxobutanoate contacts are provided by residues 51 to 52, Asp90, and Lys120; that span reads DS. Position 122 (Glu122) interacts with Mg(2+). Glu187 serves as the catalytic Proton acceptor.

Belongs to the PanB family. In terms of assembly, homodecamer; pentamer of dimers. It depends on Mg(2+) as a cofactor.

It localises to the cytoplasm. It carries out the reaction 3-methyl-2-oxobutanoate + (6R)-5,10-methylene-5,6,7,8-tetrahydrofolate + H2O = 2-dehydropantoate + (6S)-5,6,7,8-tetrahydrofolate. Its pathway is cofactor biosynthesis; (R)-pantothenate biosynthesis; (R)-pantoate from 3-methyl-2-oxobutanoate: step 1/2. In terms of biological role, catalyzes the reversible reaction in which hydroxymethyl group from 5,10-methylenetetrahydrofolate is transferred onto alpha-ketoisovalerate to form ketopantoate. This chain is 3-methyl-2-oxobutanoate hydroxymethyltransferase, found in Tropheryma whipplei (strain TW08/27) (Whipple's bacillus).